Consider the following 57-residue polypeptide: uncharacterized protein (57 aa).

The next 2 helical transmembrane spans lie at 2–22 (LLVV…LRSV) and 29–49 (GFLL…MTVI).

The protein localises to the cell membrane. This is an uncharacterized protein from Bacillus subtilis (strain 168).